We begin with the raw amino-acid sequence, 887 residues long: Golgin IMH1 (887 aa).

Disordered regions lie at residues 16–50 (LAKG…EELP), 142–214 (QESL…MKSQ), 240–301 (GASQ…SAGD), and 783–822 (LKMS…SISS). Composition is skewed to basic and acidic residues over residues 37-50 (GRRE…EELP) and 145-210 (LEQR…HAAE). A coiled-coil region spans residues 118–241 (AMLTEEIKRI…YKSTIQELGA (124 aa)). Polar residues predominate over residues 240–254 (GASQATGEAQPSSEA). Over residues 258–273 (RGKKGKGKRGKGKKRV) the composition is skewed to basic residues. Residues 299–788 (AGDEIIEAIE…LSTQLKMSKD (490 aa)) adopt a coiled-coil conformation. Low complexity predominate over residues 788–807 (DMSSQSRHSSRSGSLVSPSS). Polar residues predominate over residues 808-822 (DNETGNSPRKISISS). The region spanning 837-885 (EMESNEKLAYIRNVLLGFLEHREQRSQLLPVVSTLLQLSSHDEKRLLTS) is the GRIP domain.

It localises to the cytoplasm. It is found in the golgi apparatus membrane. In terms of biological role, involved in vesicular transport between an endosomal compartment and the Golgi apparatus. In Eremothecium gossypii (strain ATCC 10895 / CBS 109.51 / FGSC 9923 / NRRL Y-1056) (Yeast), this protein is Golgin IMH1 (IMH1).